The following is a 691-amino-acid chain: Elongation factor G (691 aa).

In terms of domain architecture, tr-type G spans 8-282 (ERVRNIGIAA…AVIDYLPAPV (275 aa)). GTP contacts are provided by residues 17 to 24 (AHIDAGKT), 81 to 85 (DTPGH), and 135 to 138 (NKMD).

This sequence belongs to the TRAFAC class translation factor GTPase superfamily. Classic translation factor GTPase family. EF-G/EF-2 subfamily.

The protein localises to the cytoplasm. Catalyzes the GTP-dependent ribosomal translocation step during translation elongation. During this step, the ribosome changes from the pre-translocational (PRE) to the post-translocational (POST) state as the newly formed A-site-bound peptidyl-tRNA and P-site-bound deacylated tRNA move to the P and E sites, respectively. Catalyzes the coordinated movement of the two tRNA molecules, the mRNA and conformational changes in the ribosome. This Synechococcus sp. (strain CC9605) protein is Elongation factor G.